A 109-amino-acid polypeptide reads, in one-letter code: GPKEPEVTVPEGDASAGRDIFDSQCSACHAIEGDSTAAPVLGGVIGRKAGQEKFAYSKGMKGSGITWNEKHLFVFLKNPSKHVPGTKMAFAGLPADKDRADLIAYLKSV.

4 residues coordinate heme c: C25, C28, H29, and M88.

It belongs to the cytochrome c family. Post-translationally, binds 1 heme c group covalently per subunit.

The protein resides in the mitochondrion intermembrane space. Its function is as follows. Electron carrier protein. The oxidized form of the cytochrome c heme group can accept an electron from the heme group of the cytochrome c1 subunit of cytochrome reductase. Cytochrome c then transfers this electron to the cytochrome oxidase complex, the final protein carrier in the mitochondrial electron-transport chain. This chain is Cytochrome c, found in Tetrahymena pyriformis.